We begin with the raw amino-acid sequence, 153 residues long: Endoribonuclease YbeY (153 aa).

His113, His117, and His123 together coordinate Zn(2+).

The protein belongs to the endoribonuclease YbeY family. Zn(2+) is required as a cofactor.

Its subcellular location is the cytoplasm. In terms of biological role, single strand-specific metallo-endoribonuclease involved in late-stage 70S ribosome quality control and in maturation of the 3' terminus of the 16S rRNA. This Aliivibrio fischeri (strain MJ11) (Vibrio fischeri) protein is Endoribonuclease YbeY.